The following is a 355-amino-acid chain: Protein RecA (355 aa).

An ATP-binding site is contributed by 67 to 74 (GPESSGKT). Residues 331-355 (NQDDKPDFTPAAHEVDEGSEAKENF) are disordered.

Belongs to the RecA family.

It is found in the cytoplasm. Its function is as follows. Can catalyze the hydrolysis of ATP in the presence of single-stranded DNA, the ATP-dependent uptake of single-stranded DNA by duplex DNA, and the ATP-dependent hybridization of homologous single-stranded DNAs. It interacts with LexA causing its activation and leading to its autocatalytic cleavage. The chain is Protein RecA from Erwinia tasmaniensis (strain DSM 17950 / CFBP 7177 / CIP 109463 / NCPPB 4357 / Et1/99).